The following is a 381-amino-acid chain: Protein COS8 (381 aa).

The Extracellular portion of the chain corresponds to 1–42 (MKENEVKDEKSVDVLSFKQLEFQKTVLPQDVFRNELTWFCYE). Residues 43–63 (IYKSLAFRIWMLLWLPLSVWW) form a helical membrane-spanning segment. Residues 64 to 72 (KLSSNWIHP) are Cytoplasmic-facing. Residues 73 to 93 (LIVSLLVLFLGPFFVLVICGL) traverse the membrane as a helical segment. The Extracellular portion of the chain corresponds to 94 to 237 (SRKRSLSKQL…WILKRIFNLR (144 aa)). A helical transmembrane segment spans residues 238 to 258 (CLPLFLYYFLIVYTSGNADLI). The Cytoplasmic portion of the chain corresponds to 259–381 (SRFLFPVVMF…QSARNEKPLK (123 aa)).

It belongs to the DUP/COS family.

It localises to the membrane. This Saccharomyces cerevisiae (strain ATCC 204508 / S288c) (Baker's yeast) protein is Protein COS8 (COS8).